The following is a 79-amino-acid chain: ESX secretion system protein YukD (79 aa).

This sequence belongs to the EsaB family.

Required for YukE secretion. Probable component or regulator of the ESX/ESAT-6-like secretion system (BsEss). The chain is ESX secretion system protein YukD (yukD) from Bacillus subtilis (strain 168).